The sequence spans 248 residues: Ethylene-responsive transcription factor ERF026 (248 aa).

A DNA-binding region (AP2/ERF) is located at residues 89-145 (VYRGIRCRSGKWVSEIREPKKTTRVWLGTYPTPEMAAAAYDVAALALKGGDTLLNFP). The tract at residues 225 to 248 (PPWMGSPPSDDSPENSDGESLWSY) is disordered.

This sequence belongs to the AP2/ERF transcription factor family. ERF subfamily.

The protein localises to the nucleus. Its function is as follows. Probably acts as a transcriptional activator. Binds to the GCC-box pathogenesis-related promoter element. May be involved in the regulation of gene expression by stress factors and by components of stress signal transduction pathways. This is Ethylene-responsive transcription factor ERF026 (ERF026) from Arabidopsis thaliana (Mouse-ear cress).